Consider the following 231-residue polypeptide: Small ribosomal subunit protein uS3 (231 aa).

The KH type-2 domain maps to 39–107 (IRKHIMKAIP…DVSLNIVEIR (69 aa)).

Belongs to the universal ribosomal protein uS3 family. Part of the 30S ribosomal subunit. Forms a tight complex with proteins S10 and S14.

In terms of biological role, binds the lower part of the 30S subunit head. Binds mRNA in the 70S ribosome, positioning it for translation. The polypeptide is Small ribosomal subunit protein uS3 (Rhizorhabdus wittichii (strain DSM 6014 / CCUG 31198 / JCM 15750 / NBRC 105917 / EY 4224 / RW1) (Sphingomonas wittichii)).